Consider the following 333-residue polypeptide: Taste receptor type 2 member 38 (333 aa).

Topologically, residues 1–17 are extracellular; it reads MLTLTHICTVSYEVRST. The helical transmembrane segment at 18-38 threads the bilayer; it reads FLFISVLEFAVGFLTNAFISL. Topologically, residues 39–55 are cytoplasmic; the sequence is VNFWDVVKRQPLSNSDC. The helical transmembrane segment at 56 to 76 threads the bilayer; sequence VLLCLSISRLFLHGLLFLSAI. At 77 to 94 the chain is on the extracellular side; sequence QLTHFQKLSEPLNHSYQV. The chain crosses the membrane as a helical span at residues 95 to 115; the sequence is ILMLWMIANQANLWLAACLSL. Topologically, residues 116–142 are cytoplasmic; the sequence is LYCSKLIRFSHTFLICLASWVSRKISQ. The helical transmembrane segment at 143-163 threads the bilayer; it reads MLLGIILCSCICTVLCVWCFF. Topologically, residues 164–190 are extracellular; sequence GRLHFTVTTVLFMNNNTRLNWQIKDLN. N-linked (GlcNAc...) asparagine glycosylation occurs at asparagine 178. The helical transmembrane segment at 191 to 211 threads the bilayer; it reads LFYSFLFCYLWSVPPFLLFLV. The Cytoplasmic segment spans residues 212 to 251; sequence SSGMLTVSLGRHMRTMKVYTRDSRDPSLEAHIKALKSLVS. Residues 252-272 form a helical membrane-spanning segment; that stretch reads FFCFFVISSCAAFISVPLLIL. Residues 273-276 lie on the Extracellular side of the membrane; the sequence is WHDK. A helical membrane pass occupies residues 277–297; it reads IGVMVCVGIMAACPSGHAAVL. The Cytoplasmic portion of the chain corresponds to 298–333; the sequence is ISGNAKLRRAVTTILLWAQSSLKVRADHMADSRTLC.

The protein belongs to the G-protein coupled receptor T2R family.

It is found in the membrane. In terms of biological role, receptor that may play a role in the perception of bitterness and is gustducin-linked. May play a role in sensing the chemical composition of the gastrointestinal content. The activity of this receptor may stimulate alpha gustducin, mediate PLC-beta-2 activation and lead to the gating of TRPM5. The chain is Taste receptor type 2 member 38 (TAS2R38) from Papio hamadryas (Hamadryas baboon).